Here is a 414-residue protein sequence, read N- to C-terminus: Diaminopimelate decarboxylase (414 aa).

At lysine 52 the chain carries N6-(pyridoxal phosphate)lysine. Pyridoxal 5'-phosphate is bound by residues glycine 231 and 265 to 268 (EPGR). Residues arginine 268, arginine 304, and tyrosine 308 each contribute to the substrate site. The active-site Proton donor is cysteine 334. Positions 335 and 362 each coordinate substrate. Residue tyrosine 362 participates in pyridoxal 5'-phosphate binding.

This sequence belongs to the Orn/Lys/Arg decarboxylase class-II family. LysA subfamily. As to quaternary structure, homodimer. Pyridoxal 5'-phosphate serves as cofactor.

It carries out the reaction meso-2,6-diaminopimelate + H(+) = L-lysine + CO2. The protein operates within amino-acid biosynthesis; L-lysine biosynthesis via DAP pathway; L-lysine from DL-2,6-diaminopimelate: step 1/1. Its function is as follows. Specifically catalyzes the decarboxylation of meso-diaminopimelate (meso-DAP) to L-lysine. The polypeptide is Diaminopimelate decarboxylase (Neisseria meningitidis serogroup B (strain ATCC BAA-335 / MC58)).